The sequence spans 241 residues: Zinc finger CCHC domain-containing protein 24 (241 aa).

A phosphoserine mark is found at S65 and S93. A CCHC-type zinc finger spans residues 132–149 (YLCHLCFNKGHYIKDCPQ).

The polypeptide is Zinc finger CCHC domain-containing protein 24 (Mus musculus (Mouse)).